A 705-amino-acid polypeptide reads, in one-letter code: MPLRNVMAENNFKMLKIQQCVANKLPRNRPYICNICFKHFETPSKLARHYLIHTGQKPFECDVCHKNFRQLVHLERHQLTHNLPFSCNICQRHFKNLKTFVKHQQLHNESYHNDVKVRRLLETKQEKPVYGMCNTFTADERWALHPCSKSDATYSTTKRRKNIHACTICGKMFPSQSKLDRHSLIHTGQRPFKCVLCSKSFRQSTHLKIHQLTHSEERPFQCCFCQKGFKIQSKLLKHKQIHTRNKTLQNLPLKVKSPESCPLPNKLNAKQDAFESGDMGESEENNPLDVHSIYIVPFQCSECEECFESEQILNGHKCLPARGGRVPSRLKRSCNYKTIVKKLLAKLKRAGGKKSDDLQSEKKRTFKSNYLKNCERSSGKPNIEQTQRTFVGSLSRHGSYKTVSKKKKKTLALPFSWQKQFQSQNTGKSLQGILTTGSILSMDGSVNNKDLSIYGSSGEEYLNCDMLQCGFSDSSENIHTGHKMCPCDKCDKVFPSISKLQRHYLIHTGQRPFDCNVCGKSFRQSAHLKRHKLTHIEKIPYSSFWRVDFGNVNQLFIHPSDDVSYNASQQCEGLGSQSCESSESSQVSEIEVKVEPEDFLLGSHCRSRQSYLANALVESEQSHHCYSYLGRPERSDGLLYQCSVCCKHFRSPSKLERHYLIHAGQKPFECSVCGKTFRQAPHWKRHQLTHFKERPQEKVVLDSTV.

A Glycyl lysine isopeptide (Lys-Gly) (interchain with G-Cter in SUMO2) cross-link involves residue Lys16. C2H2-type zinc fingers lie at residues 31 to 53, 59 to 81, and 85 to 107; these read YICNICFKHFETPSKLARHYLIH, FECDVCHKNFRQLVHLERHQLTH, and FSCNICQRHFKNLKTFVKHQQLH. Glycyl lysine isopeptide (Lys-Gly) (interchain with G-Cter in SUMO2) cross-links involve residues Lys116, Lys124, and Lys149. 3 consecutive C2H2-type zinc fingers follow at residues 164-186, 192-214, and 220-242; these read HACTICGKMFPSQSKLDRHSLIH, FKCVLCSKSFRQSTHLKIHQLTH, and FQCCFCQKGFKIQSKLLKHKQIH. Residue Lys266 forms a Glycyl lysine isopeptide (Lys-Gly) (interchain with G-Cter in SUMO2) linkage. The segment at 298–322 adopts a C2H2-type 7; degenerate zinc-finger fold; that stretch reads FQCSECEECFESEQILNGHKCLPAR. 4 C2H2-type zinc fingers span residues 485–507, 513–535, 640–662, and 668–690; these read CPCDKCDKVFPSISKLQRHYLIH, FDCNVCGKSFRQSAHLKRHKLTH, YQCSVCCKHFRSPSKLERHYLIH, and FECSVCGKTFRQAPHWKRHQLTH. A Glycyl lysine isopeptide (Lys-Gly) (interchain with G-Cter in SUMO2) cross-link involves residue Lys698.

This sequence belongs to the krueppel C2H2-type zinc-finger protein family.

The protein resides in the nucleus. May be involved in transcriptional regulation. The polypeptide is Zinc finger protein 770 (Znf770) (Mus musculus (Mouse)).